The following is a 391-amino-acid chain: Succinate--CoA ligase [GDP-forming] subunit beta, mitochondrial (391 aa).

The ATP-grasp domain maps to 5–233; sequence KKIMADHGVT…NAEFRQKEIF (229 aa). GTP is bound by residues Gln16, 49–51, and Leu105; that span reads GRG. Residues Asn202 and Asp216 each coordinate Mg(2+). Residues Asn267 and 324–326 each bind substrate; that span reads GIV.

Belongs to the succinate/malate CoA ligase beta subunit family. GTP-specific subunit beta subfamily. In terms of assembly, heterodimer of an alpha and a beta subunit. The beta subunit determines specificity for GTP. Mg(2+) serves as cofactor. As to expression, widely expressed. Not present in breast muscle.

The protein localises to the mitochondrion. It catalyses the reaction GTP + succinate + CoA = succinyl-CoA + GDP + phosphate. The protein operates within carbohydrate metabolism; tricarboxylic acid cycle; succinate from succinyl-CoA (ligase route): step 1/1. In terms of biological role, GTP-specific succinyl-CoA synthetase functions in the citric acid cycle (TCA), coupling the hydrolysis of succinyl-CoA to the synthesis of GTP and thus represents the only step of substrate-level phosphorylation in the TCA. The beta subunit provides nucleotide specificity of the enzyme and binds the substrate succinate, while the binding sites for coenzyme A and phosphate are found in the alpha subunit. The sequence is that of Succinate--CoA ligase [GDP-forming] subunit beta, mitochondrial from Columba livia (Rock dove).